The chain runs to 154 residues: Universal stress protein Sll1388 (154 aa).

Belongs to the universal stress protein A family.

The chain is Universal stress protein Sll1388 from Synechocystis sp. (strain ATCC 27184 / PCC 6803 / Kazusa).